Here is a 230-residue protein sequence, read N- to C-terminus: Orotate phosphoribosyltransferase (230 aa).

5-phospho-alpha-D-ribose 1-diphosphate-binding positions include Arg107, Lys108, Lys111, His113, and 133 to 141 (EDLTTAGGS). Thr137 provides a ligand contact to orotate.

This sequence belongs to the purine/pyrimidine phosphoribosyltransferase family. PyrE subfamily. As to quaternary structure, homodimer. The cofactor is Mg(2+).

The enzyme catalyses orotidine 5'-phosphate + diphosphate = orotate + 5-phospho-alpha-D-ribose 1-diphosphate. The protein operates within pyrimidine metabolism; UMP biosynthesis via de novo pathway; UMP from orotate: step 1/2. In terms of biological role, catalyzes the transfer of a ribosyl phosphate group from 5-phosphoribose 1-diphosphate to orotate, leading to the formation of orotidine monophosphate (OMP). This Allorhizobium ampelinum (strain ATCC BAA-846 / DSM 112012 / S4) (Agrobacterium vitis (strain S4)) protein is Orotate phosphoribosyltransferase.